Consider the following 455-residue polypeptide: Protein YmfN (455 aa).

Belongs to the phage terminase family.

The protein is Protein YmfN (ymfN) of Escherichia coli (strain K12).